We begin with the raw amino-acid sequence, 265 residues long: Type III pantothenate kinase (265 aa).

17-24 lines the ATP pocket; the sequence is DIGNTSIS. 114-117 serves as a coordination point for substrate; the sequence is GSDV. D116 (proton acceptor) is an active-site residue. Residue D137 coordinates K(+). ATP is bound at residue T140. T192 contacts substrate.

It belongs to the type III pantothenate kinase family. Homodimer. NH4(+) is required as a cofactor. The cofactor is K(+).

Its subcellular location is the cytoplasm. It catalyses the reaction (R)-pantothenate + ATP = (R)-4'-phosphopantothenate + ADP + H(+). The protein operates within cofactor biosynthesis; coenzyme A biosynthesis; CoA from (R)-pantothenate: step 1/5. Its function is as follows. Catalyzes the phosphorylation of pantothenate (Pan), the first step in CoA biosynthesis. This is Type III pantothenate kinase from Borrelia hermsii (strain HS1 / DAH).